The sequence spans 221 residues: Translation initiation factor 6 (221 aa).

Belongs to the eIF-6 family.

Binds to the 50S ribosomal subunit and prevents its association with the 30S ribosomal subunit to form the 70S initiation complex. The polypeptide is Translation initiation factor 6 (Cenarchaeum symbiosum (strain A)).